We begin with the raw amino-acid sequence, 702 residues long: DNA ligase (702 aa).

Residues 32 to 36 (DAEYD) and 81 to 82 (SL) each bind NAD(+). The tract at residues 104-125 (AESSAQKASLNPLVRDSDQKNR) is disordered. Glutamate 139 contributes to the NAD(+) binding site. Catalysis depends on lysine 141, which acts as the N6-AMP-lysine intermediate. The NAD(+) site is built by arginine 162, glutamate 199, lysine 316, and lysine 340. Cysteine 434, cysteine 437, cysteine 452, and cysteine 458 together coordinate Zn(2+). Residues 616-702 (KPNHPFRDKT…KALKPEGTKV (87 aa)) enclose the BRCT domain.

This sequence belongs to the NAD-dependent DNA ligase family. LigA subfamily. It depends on Mg(2+) as a cofactor. Mn(2+) serves as cofactor.

The catalysed reaction is NAD(+) + (deoxyribonucleotide)n-3'-hydroxyl + 5'-phospho-(deoxyribonucleotide)m = (deoxyribonucleotide)n+m + AMP + beta-nicotinamide D-nucleotide.. Its function is as follows. DNA ligase that catalyzes the formation of phosphodiester linkages between 5'-phosphoryl and 3'-hydroxyl groups in double-stranded DNA using NAD as a coenzyme and as the energy source for the reaction. It is essential for DNA replication and repair of damaged DNA. This Hamiltonella defensa subsp. Acyrthosiphon pisum (strain 5AT) protein is DNA ligase.